Consider the following 215-residue polypeptide: UPF0502 protein PputGB1_3531 (215 aa).

This sequence belongs to the UPF0502 family.

The sequence is that of UPF0502 protein PputGB1_3531 from Pseudomonas putida (strain GB-1).